Reading from the N-terminus, the 114-residue chain is Large ribosomal subunit protein bL19 (114 aa).

This sequence belongs to the bacterial ribosomal protein bL19 family.

Functionally, this protein is located at the 30S-50S ribosomal subunit interface and may play a role in the structure and function of the aminoacyl-tRNA binding site. This chain is Large ribosomal subunit protein bL19, found in Thermoanaerobacter sp. (strain X514).